A 309-amino-acid polypeptide reads, in one-letter code: MAERVLANLEAKFTEGNYYDILQSYKALYNRFSTQKKYKETVTLLESGCNKFLEYKQWNCAADLAKLLIECYKNFKIQYSDESKEPIIKIFKNFKGECAGKISFMRDAIEWSSKNGGDSKGSEEFHTLLAITLSEEGDYIDAQKHFIFGNDYFSFCEMLKNWTEDVDEEEKDLYITRAIFGLLCLKKLKQASDLYNLFTTKVIKGDPSPLLNFDRFLLLTLERDALPLFNLLRQKYERSLKRDPQFKKFLDQIANIFYNVPIQSGGGLSGMLSNLLSGFGGGMGMGGNSSGGGLASMEVDGPTIEDEMD.

The interval 290–309 is disordered; sequence SGGGLASMEVDGPTIEDEMD.

The protein belongs to the GET4 family.

May play a role in insertion of tail-anchored proteins into the endoplasmic reticulum membrane. The chain is Golgi to ER traffic protein 4 homolog from Dictyostelium discoideum (Social amoeba).